We begin with the raw amino-acid sequence, 338 residues long: tRNA N6-adenosine threonylcarbamoyltransferase (338 aa).

The Fe cation site is built by His111 and His115. Substrate-binding positions include 134-138, Asp167, Gly180, and Asn272; that span reads LVSGG. Fe cation is bound at residue Asp300.

This sequence belongs to the KAE1 / TsaD family. It depends on Fe(2+) as a cofactor.

The protein localises to the cytoplasm. It carries out the reaction L-threonylcarbamoyladenylate + adenosine(37) in tRNA = N(6)-L-threonylcarbamoyladenosine(37) in tRNA + AMP + H(+). Functionally, required for the formation of a threonylcarbamoyl group on adenosine at position 37 (t(6)A37) in tRNAs that read codons beginning with adenine. Is involved in the transfer of the threonylcarbamoyl moiety of threonylcarbamoyl-AMP (TC-AMP) to the N6 group of A37, together with TsaE and TsaB. TsaD likely plays a direct catalytic role in this reaction. The sequence is that of tRNA N6-adenosine threonylcarbamoyltransferase from Shewanella baltica (strain OS223).